The following is a 572-amino-acid chain: Proline--tRNA ligase (572 aa).

This sequence belongs to the class-II aminoacyl-tRNA synthetase family. ProS type 1 subfamily. As to quaternary structure, homodimer.

It is found in the cytoplasm. The enzyme catalyses tRNA(Pro) + L-proline + ATP = L-prolyl-tRNA(Pro) + AMP + diphosphate. Functionally, catalyzes the attachment of proline to tRNA(Pro) in a two-step reaction: proline is first activated by ATP to form Pro-AMP and then transferred to the acceptor end of tRNA(Pro). As ProRS can inadvertently accommodate and process non-cognate amino acids such as alanine and cysteine, to avoid such errors it has two additional distinct editing activities against alanine. One activity is designated as 'pretransfer' editing and involves the tRNA(Pro)-independent hydrolysis of activated Ala-AMP. The other activity is designated 'posttransfer' editing and involves deacylation of mischarged Ala-tRNA(Pro). The misacylated Cys-tRNA(Pro) is not edited by ProRS. The protein is Proline--tRNA ligase of Shigella dysenteriae serotype 1 (strain Sd197).